A 36-amino-acid chain; its full sequence is F420-dependent NADP reductase (36 aa).

Residue 9–12 coordinates NADP(+); it reads TGNI.

This sequence belongs to the F420-dependent NADP reductase family. Homotetramer.

The catalysed reaction is reduced coenzyme F420-(gamma-L-Glu)(n) + NADP(+) = oxidized coenzyme F420-(gamma-L-Glu)(n) + NADPH + 2 H(+). Its function is as follows. Catalyzes the reduction of NADP(+) with F420H(2) via hydride transfer, and the reverse reaction, i.e. the reduction of F420 with NADPH. In M.organophilum, an alcohol-fermenting methanogen containing an NADP-dependent alcohol dehydrogenase, is probably involved in the regeneration of F420H(2) required for CO(2) reduction to methane. Thus, during growth on alcohol and CO(2), the F420-dependent NADP reductase probably has the function of coupling the NADP-dependent oxidation of the alcohol to the aldehyde with the F420-dependent reduction of CO(2) to methane. The chain is F420-dependent NADP reductase (fno) from Methanogenium organophilum.